The following is a 292-amino-acid chain: 1D-myo-inositol 2-acetamido-2-deoxy-alpha-D-glucopyranoside deacetylase (292 aa).

Residues His12, Asp15, and His147 each coordinate Zn(2+).

This sequence belongs to the MshB deacetylase family. The cofactor is Zn(2+).

The enzyme catalyses 1D-myo-inositol 2-acetamido-2-deoxy-alpha-D-glucopyranoside + H2O = 1D-myo-inositol 2-amino-2-deoxy-alpha-D-glucopyranoside + acetate. Its function is as follows. Catalyzes the deacetylation of 1D-myo-inositol 2-acetamido-2-deoxy-alpha-D-glucopyranoside (GlcNAc-Ins) in the mycothiol biosynthesis pathway. In Rhodococcus opacus (strain B4), this protein is 1D-myo-inositol 2-acetamido-2-deoxy-alpha-D-glucopyranoside deacetylase.